Consider the following 130-residue polypeptide: Large ribosomal subunit protein bL21 (130 aa).

The disordered stretch occupies residues 110 to 130; it reads KTAAQPAADEAVAANEVDSEA. Residues 112 to 130 are compositionally biased toward low complexity; sequence AAQPAADEAVAANEVDSEA.

This sequence belongs to the bacterial ribosomal protein bL21 family. In terms of assembly, part of the 50S ribosomal subunit. Contacts protein L20.

Functionally, this protein binds to 23S rRNA in the presence of protein L20. The polypeptide is Large ribosomal subunit protein bL21 (Cyanothece sp. (strain PCC 7425 / ATCC 29141)).